Reading from the N-terminus, the 83-residue chain is Cytochrome b559 subunit alpha (83 aa).

Residues 22-36 (VIHSITIPALFIAGW) traverse the membrane as a helical segment. H24 contributes to the heme binding site.

Belongs to the PsbE/PsbF family. Heterodimer of an alpha subunit and a beta subunit. PSII is composed of 1 copy each of membrane proteins PsbA, PsbB, PsbC, PsbD, PsbE, PsbF, PsbH, PsbI, PsbJ, PsbK, PsbL, PsbM, PsbT, PsbX, PsbY, PsbZ, Psb30/Ycf12, peripheral proteins PsbO, CyanoQ (PsbQ), PsbU, PsbV and a large number of cofactors. It forms dimeric complexes. It depends on heme b as a cofactor.

Its subcellular location is the cellular thylakoid membrane. Its function is as follows. This b-type cytochrome is tightly associated with the reaction center of photosystem II (PSII). PSII is a light-driven water:plastoquinone oxidoreductase that uses light energy to abstract electrons from H(2)O, generating O(2) and a proton gradient subsequently used for ATP formation. It consists of a core antenna complex that captures photons, and an electron transfer chain that converts photonic excitation into a charge separation. The chain is Cytochrome b559 subunit alpha from Synechococcus elongatus (strain ATCC 33912 / PCC 7942 / FACHB-805) (Anacystis nidulans R2).